Consider the following 385-residue polypeptide: Polyketide synthase 1 (385 aa).

The active site involves cysteine 157.

This sequence belongs to the thiolase-like superfamily. Chalcone/stilbene synthases family. As to expression, expressed in glandular trichomes.

It localises to the cytoplasm. Functionally, polyketide synthase responsible for the biosynthesis of secondary metabolites. This Cannabis sativa (Hemp) protein is Polyketide synthase 1 (PKSG1).